Consider the following 185-residue polypeptide: MISVNDFRTGLTIEVDGGIWRVVDFQHVKPGKGAAFVRSKLRNLRTGAIQEKTFRAGEKVAKAQIETKTMQYLYANGDQHVFMDTSSYEQLELNENQIEEELKYLLENMSVHIMMYQSETLGIELPNTVELKVVETEPGIKGDTASGGTKPAKTETGLVVNVPFFVNEGDTLVVNTSDGSYVSRA.

The protein belongs to the elongation factor P family.

It is found in the cytoplasm. It functions in the pathway protein biosynthesis; polypeptide chain elongation. Its function is as follows. Involved in peptide bond synthesis. Stimulates efficient translation and peptide-bond synthesis on native or reconstituted 70S ribosomes in vitro. Probably functions indirectly by altering the affinity of the ribosome for aminoacyl-tRNA, thus increasing their reactivity as acceptors for peptidyl transferase. The protein is Elongation factor P of Bacillus velezensis (strain DSM 23117 / BGSC 10A6 / LMG 26770 / FZB42) (Bacillus amyloliquefaciens subsp. plantarum).